The chain runs to 215 residues: 2-dehydro-3-deoxy-phosphogluconate aldolase (215 aa).

Glutamate 46 serves as the catalytic Proton acceptor. The pyruvate site is built by arginine 50, threonine 74, and lysine 134. Lysine 134 (schiff-base intermediate with substrate) is an active-site residue.

It belongs to the KHG/KDPG aldolase family. As to quaternary structure, homotrimer.

The enzyme catalyses 2-dehydro-3-deoxy-6-phospho-D-gluconate = D-glyceraldehyde 3-phosphate + pyruvate. It functions in the pathway carbohydrate acid metabolism; 2-dehydro-3-deoxy-D-gluconate degradation; D-glyceraldehyde 3-phosphate and pyruvate from 2-dehydro-3-deoxy-D-gluconate: step 2/2. In terms of biological role, involved in the degradation of glucose via the Entner-Doudoroff pathway. Catalyzes the reversible, stereospecific retro-aldol cleavage of 2-keto-3-deoxy-6-phosphogluconate (KDPG) to pyruvate and D-glyceraldehyde-3-phosphate. Involved in the degradation of 3,6-anhydro-L-galactose (L-AnG), which is the major monomeric sugar of red macroalgae. The cleavage of KDPG to glyceraldehyde 3-phosphate and pyruvate is the sixth step of this pathway. The polypeptide is 2-dehydro-3-deoxy-phosphogluconate aldolase (Pseudoalteromonas atlantica (strain T6c / ATCC BAA-1087)).